Reading from the N-terminus, the 1491-residue chain is Neurexin-1a (1491 aa).

The signal sequence occupies residues 1 to 27 (MSFSMRNGAHLIWIGLLVCCLVDMGAS). The 181-residue stretch at 28–208 (MEFTGAEGQW…SDICEADHIC (181 aa)) folds into the Laminin G-like 1 domain. The Extracellular segment spans residues 28 to 1415 (MEFTGAEGQW…EVIRESSSTT (1388 aa)). The region spanning 198 to 236 (NSDICEADHICLNGGVCSIVNDEPICDCSETGFQGKDCS) is the EGF-like 1 domain. Disulfide bonds link Cys-202–Cys-214, Cys-208–Cys-223, and Cys-225–Cys-235. Laminin G-like domains are found at residues 263–460 (MATF…AFKC) and 467–661 (DPVT…KPSC). Residues Asp-309, Leu-326, and Met-394 each coordinate Ca(2+). Cystine bridges form between Cys-424–Cys-460, Cys-632–Cys-661, Cys-669–Cys-680, Cys-674–Cys-689, and Cys-691–Cys-701. The region spanning 665–702 (PPKQCLSNPCLNSGTCREGWNRYVCDCSGTGYLGRSCE) is the EGF-like 2 domain. Laminin G-like domains are found at residues 707-880 (ILSY…IDYC) and 894-1069 (DPVT…ERGC). 4 disulfide bridges follow: Cys-1041/Cys-1069, Cys-1076/Cys-1087, Cys-1081/Cys-1096, and Cys-1098/Cys-1108. Residues 1072–1109 (PSTTCQEDSCSNQGVCLQQWEGFSCDCSMTSYGGPLCN) form the EGF-like 3 domain. The Laminin G-like 6 domain maps to 1113-1314 (TTYIFGRDGG…DPNVRVEGSA (202 aa)). The segment at 1318-1408 (GDMPSSSITP…AKGYPSPEVI (91 aa)) is disordered. Residues 1322–1353 (SSSITPQSSVSAAGNRSETSPSITDITTTTAS) show a composition bias toward low complexity. Positions 1354 to 1364 (NRQGKQTTTPQ) are enriched in polar residues. A helical membrane pass occupies residues 1416 to 1436 (GMVVGIVAAAALCILILLYAM). Residues 1437–1491 (YKYRNRDEGSYHVDESRNYISNSATQPNGAAVKEKPIGVPKNKKDKKNKDKEYYV) are Cytoplasmic-facing. The segment at 1457–1491 (SNSATQPNGAAVKEKPIGVPKNKKDKKNKDKEYYV) is disordered.

It belongs to the neurexin family.

It is found in the membrane. Its function is as follows. Neuronal cell surface protein that may be involved in cell recognition and cell adhesion. The protein is Neurexin-1a (nrxn1a) of Danio rerio (Zebrafish).